The primary structure comprises 584 residues: Asparagine synthetase [glutamine-hydrolyzing] 1 (584 aa).

Cys-2 acts as the For GATase activity in catalysis. Residues 2 to 185 enclose the Glutamine amidotransferase type-2 domain; the sequence is CGILAVLGCS…PGHFYSSKLG (184 aa). Residues 50-54, 75-77, and Asp-98 contribute to the L-glutamine site; these read RLAVI and NGE. The Asparagine synthetase domain maps to 193-516; that stretch reads PPWFNESVPS…PQNSARLTVP (324 aa). ATP contacts are provided by residues Leu-231, Val-267, and 341–342; that span reads SG.

The enzyme catalyses L-aspartate + L-glutamine + ATP + H2O = L-asparagine + L-glutamate + AMP + diphosphate + H(+). It participates in amino-acid biosynthesis; L-asparagine biosynthesis; L-asparagine from L-aspartate (L-Gln route): step 1/1. Essential for nitrogen assimilation, distribution and remobilization within the plant via the phloem. The polypeptide is Asparagine synthetase [glutamine-hydrolyzing] 1 (ASN1) (Arabidopsis thaliana (Mouse-ear cress)).